The sequence spans 219 residues: Poxin (219 aa).

Histidine 17 acts as the Proton donor in catalysis. The Shared with catalytic histidine of dimeric partner role is filled by tyrosine 138. Catalysis depends on lysine 142, which acts as the Proton acceptor; shared with catalytic histidine of dimeric partner.

It belongs to the poxin family. As to quaternary structure, homodimer.

The enzyme catalyses 2',3'-cGAMP + H2O = Gp(2'-5')Ap(3') + H(+). Its function is as follows. Nuclease that is responsible for viral evasion of host cGAS-STING innate immunity. Cleaves 2',3'-cGAMP which is produced by host cGAS following recognition of cytosolic DNA and blocks the subsequent 2',3'-cGAMP-mediated activation of TMEM173/STING, which normally spreads to adjacent cells and activates the interferon and NF-kappa-B immune responses. The protein is Poxin (OPG188) of Bos taurus (Bovine).